The primary structure comprises 165 residues: uncharacterized protein (165 aa).

Residues 22-34 (QQANQENMSSRTD) show a composition bias toward polar residues. The disordered stretch occupies residues 22–45 (QQANQENMSSRTDSPIPPFGESEQ).

This is an uncharacterized protein from Homo sapiens (Human).